Reading from the N-terminus, the 400-residue chain is Subtilisin-like protease 11 (400 aa).

The N-terminal stretch at 1 to 19 (MGLFKVIFTAVAALSAVDA) is a signal peptide. Residues 20 to 117 (AELLSSAKSK…VEHDRHVYIS (98 aa)) constitute a propeptide that is removed on maturation. The region spanning 35–116 (SYLVVMKDSV…FVEHDRHVYI (82 aa)) is the Inhibitor I9 domain. The Peptidase S8 domain occupies 127–400 (SWGLGRVSHR…NKLLYNRSGK (274 aa)). The N-linked (GlcNAc...) asparagine glycan is linked to Asn-138. Catalysis depends on Asp-159, which acts as the Charge relay system. N-linked (GlcNAc...) asparagine glycosylation occurs at Asn-181. Catalysis depends on His-191, which acts as the Charge relay system. N-linked (GlcNAc...) asparagine glycosylation is found at Asn-252 and Asn-337. Ser-346 serves as the catalytic Charge relay system. N-linked (GlcNAc...) asparagine glycans are attached at residues Asn-388 and Asn-396.

It belongs to the peptidase S8 family.

It localises to the secreted. Its function is as follows. Secreted subtilisin-like serine protease with keratinolytic activity that contributes to pathogenicity. This Trichophyton verrucosum (strain HKI 0517) protein is Subtilisin-like protease 11 (SUB11).